A 549-amino-acid polypeptide reads, in one-letter code: O-fucosyltransferase 29 (549 aa).

A helical; Signal-anchor for type II membrane protein membrane pass occupies residues 43–63 (TVMWTWVCGFMLFSLGVISLF). Residue N152 is glycosylated (N-linked (GlcNAc...) asparagine). 292–294 (HLR) lines the substrate pocket. N-linked (GlcNAc...) asparagine glycosylation is found at N359 and N527. The disordered stretch occupies residues 506–549 (PFSYDKTSTDDEEEDMSEENHNSTSPGHVHLSSADNERDEVFPD). Residues 540–549 (DNERDEVFPD) are compositionally biased toward basic and acidic residues.

This sequence belongs to the glycosyltransferase GT106 family.

Its subcellular location is the membrane. It participates in glycan metabolism. The chain is O-fucosyltransferase 29 from Arabidopsis thaliana (Mouse-ear cress).